The following is a 981-amino-acid chain: DNA ligase 4 (981 aa).

Residues Glu-320, Lys-322, Arg-327, Glu-380, Phe-424, Glu-484, Lys-489, Lys-506, and Lys-508 each contribute to the ATP site. Lys-322 serves as the catalytic N6-AMP-lysine intermediate. Glu-380 is a binding site for Mg(2+). Glu-484 contributes to the Mg(2+) binding site. Positions 544–563 are disordered; sequence SEKNNPSSYESGSDSDSDSE. BRCT domains are found at residues 721–819 and 875–980; these read SKAD…PKYV and ERLL…EYAA.

It belongs to the ATP-dependent DNA ligase family. Mg(2+) serves as cofactor.

The protein localises to the nucleus. It catalyses the reaction ATP + (deoxyribonucleotide)n-3'-hydroxyl + 5'-phospho-(deoxyribonucleotide)m = (deoxyribonucleotide)n+m + AMP + diphosphate.. In terms of biological role, DNA ligase involved in DNA non-homologous end joining (NHEJ); required for double-strand break (DSB) repair. This chain is DNA ligase 4 (LIG4), found in Eremothecium gossypii (strain ATCC 10895 / CBS 109.51 / FGSC 9923 / NRRL Y-1056) (Yeast).